The sequence spans 5193 residues: MHYLALSPGFLCYTIKTLILAYLASVLVLAASQGVFPRLENVGAFRKVSTVPTHATCGFPGPSTFCRSPVAAEHVQLCTERLCIQDCPYRSASPLYTALLEGLRSCIPADDGDLHPYSRSSSVSFMFGSHQNCPSLRAPRLAAELTLAVWLKLEQGGTMCVIEKTVDGQIVFKVTISEKETMFYYRTVNGLQPPIKVMTPGRILMKKWIHLTVQVHQTAISFFVDGLEENSTAFDTRTLHDSVTDSVSSVIQVGQSLNGSEQFVGRMQDFRLYNVSLTNREILEVFSGDFPHLHIQPHCRCPGSHPRVHPSVQQYCIPNGAGDTPEHRMSRLNPEAHPLSFINDDDVATSWISHVFTNITQLYEGVAISIDLENGQYQVLKVITQFSSLQPVAIRIQRKKADSSPWEDWQYFARNCSVWGMKDNEDLENPNSVNCLQLPDFIPFSHGNVTFDLLTSGQKHRPGYNDFYNSSVLQEFMRATQIRLHFHGQYYPAGHTVDWRHQYYAVDEIIVSGRCQCHGHAETCDRTRRPYRCLCSPHSFTEGPQCDRCSPLYNDKPFRSGDNVNAFNCKPCQCHGHASSCHYDASVDPFPLEHNRGGGGVCDDCQHHTTGRHCESCQDYFYRPVGADPAAPDACKLCDCNRAGTRNGSLHCDPIGGQCDCKRRVSGRQCLQCQDGFYDLQALDPDGCRPCNCNPSGTVDGDITCHQNSGQCSCKANVIGLRCNRCNFGFKFLQSFNGDGCEPCQCNLHGSVNQLCDPLSGQCACKKEAKGLKCDSCRENFYGLPWSACEVCDCSKAGSQPGTVCDTETGQCVCKPNVGGRQCSQCKAGYFNLYQNDSHLCLTCNCEKMGTVNGSLRCDKSTGQCPCKLGVTGLRCHQCKPHRFNLTMDNPQGCQACDCDSLGTLPGSMCDPISGQCLCLPHRQGRRCEQCQPGFYSSPSNATGCLPCLCHTAGAVSHICNSVTGQCSCHDPSTTGRSCHQCQESYFRFDPLTGRCRPCHCHVAGASNGTCDAVTGQCFCKEFVTGSKCDTCVPGASHLDVNNLLGCSKTPSQQPPPRGWVQSSSTINVSWSPPECPNAHWLTYTLFRNGSEIYTTEDEHPYYTQYFLDTSLSPHTAYSYYIETSNVHSSTRSIPVIYETKPEVSEGHLNLTHIIPVGSDSITLTWTGLSNSSDPVAKYVLSCTPVDSTEPCVSYEGPETSATIWNLVPFTQYCFSVQGCTNESCFYSLPIIVTTAQAPPQTQGPPTVWKISPTELRIEWSPPVDSNGIIISYELYMRRWLSTEESLVFESHGLVSSHSALQSVNPSKNLLQQPQASTFISGLEPHTEYAFRVLAVNMAGRVSSAWASERTGESVPVFMAPPSVSPLSPHSLSVSWEKPAENFTRGEIIGYKISMVSEHFPLHDVPVMCSKMVHFAKSQDQSYIVRGLEPYRTYSFTVSLCDSVGCVTSALGSGQTLAAAPAQLRPPMVTGVNSTTVHIRWLPPAGVNGPPPLYHLERKKSSLPAATAAVTKGTRFVGHGYCRFPRTAHADFIGIKASFRTRVPEGLILLALSPGDQEEYFTLQLKNGRPYFLYNSQGTLVEVTPTDDPSQGYRDGEWHEIIAVRHQAFGQITLDGQYTGSSSSLNGSSVTGGYTGLFVGGVPQGHSVLQKRLEIIQRGFVGCLKDVFIMKGYSPSGTWLPLDWQSSEEQVNVHPSWEGCPTNLEEGVQFLGAGFLELPSDTFHAAKDFEISLKFQTDQLNGLLLFIHNTEGPDFLAVELKRGLLSFKFNSSLVFTRVDLRLGLADCDGKWNTVSIKKEGSVVSVRVNALKKSTSQAGGQPLLVNSPVYLGGIPRELQDAYRHLTLEPGFRGCVKEVAFARGVVVNLASVSSRAVRVNQDGCLSSDSTVNCGGNDSILVYRGSQQSVYESGLQPFTEYLYRVTASHEGGAVSSDWSRGRTLGTAPQSVPTPSRAQSINGSSVEVAWNEPAVVKGVLEKYVLKAYSEDSSQPRVPSASTELHDTSTHSGVLIGLHPFHSYTVTLTACSRAGCTESSQALSISTPQEAPQEVQAPVAVALPNSLSFFWSLPRQANGIITQYSLYVDGRLVYTGKGQNYTVTDLRVFAAYEIIVGACTQAGCTNSSQVILHTAQLPPEQVDPPGLTVLDSRTIHVRWKQPRQLNGILERYILYILNPIHNSTMWSVVYNSTEKLQAHVLHHLSPGGLYLIRLRVCTGGGCTTSEPSQALMEETIPEGVPAPRAHSYSPDSFNISWTEPEYPNGVITTYELYLDDTLIHNSSGLSCHAYGFDPGSLHTFQVQACTAKGCALGPLVGNRTLEAPPEGVVNVLVKPEGSREAHVRWDAPAHPNGRLTYSVHFTGSFYADQAGDNYTLLSGTKTIRGIEGSRLWVLVDGLVPCSHYMVQVNASNSRGSVLSDPVSVEMPPGAPDGLLSPRLAAAAPTSLQVVWSTPARNNAPGSPRYQLQMRPGPSTHGRLELFPIPSASLSYEVTGLQPFTVYEFRLVATNGFGTAYSAWTPLMTTEDKPGPIDAPILINVKARMLSVIWRQPAKCNGAITHYNIYLHGRLYLTVSGRVTNYTVVPLHPYKAYHFQVEACTSQGCSKSPSSETVWTLPGNPEGIPSPQLFPYTPTSIIVTWQPSAHLDLLVENVTIERRVKGKKEVRNLVTLARSQAMKFIDNDPALRPWTRYEYRVLGSTLDGGTNSSAWVEVTTRPCRPSGVQPPTVRVLAPDTVEVSWKAPLMQNGDILSYEIRMPEPLIKMTNMSSIMLSHLVKHLIPFTNYSVTIVACSGGNGYLAGCTESPPTLATTHPAPPQELAPLSVILLSESDVGISWQPPSKPNGPNLRYELLRCKIQQPLASNPPEDLNLWHNIYSGTRWFYKDKGLSRFTTYEYKLFVHNSVGFTPSREVTVTTLAGSPERGATVTASILNHTAIDVRWKKPTFQDLQGDVEYYTLFWSSGTSEESLKIFPDVDFHVIGQLSPNVEYQVFLLVFNGVHAINSTVVHVTMWEEEPQGMLPPEVVIINSTAVRVIWTSPSNPNAVVTESSVYVNNKLYKTGTDAPGSFVLEDLSPFTIYDIQVEVCTKDACVKSNGTQVSTAEDTPSDISIPVIRGITSRSLQIDWTTPANPNGIILGYDVLRKTWRPCSETQKLTDKPRDELCKAVKCQYPGKVCGHTCYSPGTKVCCDGLLYDPQPGYSCCEDKYIALSPNATGVCCGGRMWEAQPDHQCCSGHYARILPGEICCPDERHNRVSVGFGDACCGTMPYATSGSQVCCAGRLQDGYRQQCCGGEMVSQDFQCCGGGEEGMVYSYLPGMLCCGQDYVNMSETICCSASSGESKAHVRKDDPTPVKCCGTELSPESQRCCDGVGYNPLKYVCSDEISAGMAMKETRVCATICPATMKATAHCGRCDFNATTHICTVMRGPLNPTGKKAVEGLCSAAEEIVHSGDVNTHSFIDRDLKPSTVYEYRISAWNSYGRGFSQSVRASTREDVPEGVKAPRWARTGKHEDVIFLQWEEPMQSNGPIIHYILFRDGRERFQGTALSFTDTQGIQPLQEYSYQLKACTAAGCAVSCKVVAATTQRSPENVPPPNITAQSSETLHLSWSVPEKMKDAIKAYQLWLDGKGLIYTDTSDRRQHTVTGLQPYTNYSFTLAVCTSVGCTSSEPCVGQTLQAAPQGVWVTPRHIIINSTTVELYWNPPERPNGLISQYQLRRNGSLLLVGGRDNQSFTDSNLEPGSRYIYKLEARTGGGSSWSEDYLVQMPLWTPEDIHPPCNVTVLGSDSIFVAWPTPGNLLPKIPVEYSILLSGGSVTLLVFSVRHRQSAHLKNLSPFTQYEIRIQACQNGGCGVSPGTYVRTLEAAPVGLMPPLLKALGSSCIEVKWMPPTRPNGIITSYVVHRRPADTEEESLLFVWSEGALEFTDDTGTLRPFTLYEYRVRAWNSQGAVDSPWSTIQTLEAPPRGLPAPRVQATSAHSAMLNWTEPEAPNGLISQYHVIYQERPDAAAPGSSTVHAFTVTGTSRQAHLFGLEPFTTYHIGVVAVNSAGKVSSPWTLIKTLESAPSGLMNFTVEQREKGRALLLQWSEPVKTNGVIKAYNIFNDGVLEYSGLGRQFLFRRLAPFTLYTLILEACTTAGCAHSVPQPLWTEEAPPDTQMAPTIQSVGPTNVRLHWSQPASPNGKIIHYEVIRRRSEEEDWGNTTWQADGNTVFTEYNTQGNAWVYNDTGLQPWRQYAYRICAWNSAGHTCSSWNVVRTLQAPPDGLSPPEISYVSMSPLQLLISWLPPRHSNGVIQGYRLQRDGVLPALNFNASTFSYMDSQLLPFSTYSYAILACTGGGCCTSEPTNITTPEVPPSEVSPPVLWDISAHQMNVSWSPPSIPNGKIVKYLLQCDGEEHLAGQGLSFLLSNLQPSTQYNISLVACTSGGCTASRTTSAWTKEAPPENMDPPTLHITGPESIEITWTPPRNPHGLIRSYELRRDGAIVYVGLETRYHDFTLAPGVEYSYSVTATNSRGSVLSPLVKGQTSPSAPSGLQPPKLHSGDALELLADWDPPVRTNGKIINYTLFVREMFEGKTRAMSINTTHSSFGTRSLTVKHLKPFHRYEVRVQACTALGCTSSEWTSTQTSEVPPLRQPAPHLEVQTATGGFQPIVAVWWAGPLQPNGKIICFELYRRQVAAWPGTSSSLLIYNGSFRSFMDSELLPFTEYEYQVWAVNSAGKAASNWTRCRTGPAPPEGLQAPTFHTVSSTRAVVNISVPSRPNGNISLFRVFSNSSGTHVTLSEGTATQQTLHDLSPFTTYTIGVEACTCFNCCSRGPTAELRTHPAPPSGLSPPQVQTLGSRMASVHWTPPLLPNGVIHSYELQLQRACPPDSAPRCPPSHTERKYWGPGHRASLAGLQPNTAYGVQVVAYNEAGSTASGWTNFSTKKEMPQYQALFSVDSNASMVWVDWSGTFLLNGHLKEYVVTDGGRRVYSGLDTTLYIPRMVDKIFFFQVTCTTDIGSVKTPLVQYDAATGSGLVLTTPGEKKGAGTKSTEFYSELWFIMVMAVVGLILLAIFLSLILQRKIHKEPCIRERPPLVPLQKRMTPLSVYPPGETHVGLADTRLPRSGTPMSIRSSQSVSVLRIPSQSQLSHAYSQSSLHRSVSQLMDMADKKVVTEDSLWETIMGHSSGLYVDEEELMNAIKGFSSVTKEHTAFTDTHL.

The signal sequence occupies residues 1 to 34 (MHYLALSPGFLCYTIKTLILAYLASVLVLAASQG). The Extracellular segment spans residues 35 to 5033 (VFPRLENVGA…KSTEFYSELW (4999 aa)). Asn-230, Asn-258, Asn-274, Asn-358, Asn-415, Asn-448, and Asn-469 each carry an N-linked (GlcNAc...) asparagine glycan. The Laminin N-terminal domain occupies 268-514 (QDFRLYNVSL…AVDEIIVSGR (247 aa)). Intrachain disulfides connect Cys-515–Cys-524, Cys-517–Cys-533, Cys-535–Cys-546, Cys-549–Cys-569, Cys-572–Cys-581, Cys-574–Cys-602, Cys-605–Cys-614, Cys-617–Cys-635, Cys-638–Cys-652, Cys-640–Cys-659, Cys-661–Cys-670, Cys-673–Cys-688, Cys-691–Cys-705, Cys-693–Cys-712, Cys-714–Cys-723, Cys-726–Cys-741, Cys-744–Cys-756, Cys-746–Cys-763, Cys-765–Cys-774, Cys-777–Cys-789, Cys-792–Cys-805, Cys-794–Cys-812, Cys-814–Cys-823, and Cys-826–Cys-846. Laminin EGF-like domains lie at 515–571 (CQCH…NCKP), 572–637 (CQCH…ACKL), 638–690 (CDCN…GCRP), 691–743 (CNCN…GCEP), 744–791 (CQCN…ACEV), 792–848 (CDCS…NCEK), 853–896 (NGSL…GCQA), 897–947 (CDCD…GCLP), 948–998 (CLCH…RCRP), and 999–1049 (CHCH…GCSK). The N-linked (GlcNAc...) asparagine glycan is linked to Asn-647. Asn-836 and Asn-853 each carry an N-linked (GlcNAc...) asparagine glycan. Disulfide bonds link Cys-867/Cys-876, Cys-879/Cys-894, Cys-897/Cys-910, Cys-899/Cys-917, Cys-919/Cys-928, Cys-931/Cys-945, Cys-948/Cys-960, Cys-950/Cys-967, Cys-969/Cys-979, Cys-982/Cys-996, Cys-999/Cys-1011, Cys-1001/Cys-1018, Cys-1020/Cys-1029, and Cys-1032/Cys-1047. N-linked (GlcNAc...) asparagine glycosylation occurs at Asn-885. Asn-941 carries N-linked (GlcNAc...) asparagine glycosylation. N-linked (GlcNAc...) asparagine glycosylation is present at Asn-1008. Fibronectin type-III domains follow at residues 1055–1143 (PPPR…TKPE), 1147–1241 (GHLN…APPQ), 1242–1357 (TQGP…SVPV), 1358–1462 (FMAP…AAPA), and 1463–1566 (QLRP…LQLK). N-linked (GlcNAc...) asparagine glycans are attached at residues Asn-1068, Asn-1089, Asn-1150, Asn-1171, and Asn-1222. Residues Asn-1382, Asn-1473, and Asn-1626 are each glycosylated (N-linked (GlcNAc...) asparagine). Laminin G-like domains lie at 1511–1700 (TKGT…WEGC) and 1705–1882 (EEGV…QDGC). The cysteines at positions 1663 and 1700 are disulfide-linked. Asn-1770 is a glycosylation site (N-linked (GlcNAc...) asparagine). Fibronectin type-III domains follow at residues 1847-1946 (EPGF…TAPQ), 1948-2045 (VPTP…TPQE), 2046-2132 (APQE…TAQL), 2133-2234 (PPEQ…IPEG), 2235-2321 (VPAP…APPE), 2322-2421 (GVVN…SVEM), 2422-2525 (PPGA…DKPG), 2526-2613 (PIDA…TLPG), 2617-2713 (GIPS…TRPC), 2717-2810 (GVQP…THPA), 2811-2914 (PPQE…TLAG), 2918-3009 (RGAT…MWEE), and 3013-3103 (GMLP…TPSD). Cysteines 1853 and 1882 form a disulfide. A glycan (N-linked (GlcNAc...) asparagine) is linked at Asn-1894. Positions 1931 to 1955 (VSSDWSRGRTLGTAPQSVPTPSRAQ) are disordered. The segment covering 1943–1955 (TAPQSVPTPSRAQ) has biased composition (polar residues). 10 N-linked (GlcNAc...) asparagine glycosylation sites follow: Asn-1958, Asn-2095, Asn-2121, Asn-2177, Asn-2186, Asn-2249, Asn-2276, Asn-2313, Asn-2368, and Asn-2404. 5 N-linked (GlcNAc...) asparagine glycosylation sites follow: Asn-2575, Asn-2647, Asn-2701, Asn-2761, and Asn-2779. N-linked (GlcNAc...) asparagine glycans are attached at residues Asn-2928, Asn-2998, Asn-3023, Asn-3090, Asn-3208, Asn-3322, and Asn-3411. 17 Fibronectin type-III domains span residues 3395–3489 (CPAT…TRED), 3490–3580 (VPEG…TTQR), 3581–3671 (SPEN…TLQA), 3672–3766 (APQG…TPED), 3769–3857 (PPCN…TLEA), 3858–3955 (APVG…TLEA), 3956–4059 (PPRG…SAPS), 4060–4148 (GLMN…APPD), 4149–4256 (TQMA…APPD), 4257–4346 (GLSP…TPEV), 4347–4437 (PPSE…APPE), 4438–4522 (NMDP…TSPS), 4523–4625 (APSG…VPPL), 4628–4725 (PAPH…TGPA), 4726–4818 (PPEG…THPA), 4819–4921 (PPSG…TKKE), and 4922–5005 (MPQY…YDAA). Asn-3589, Asn-3645, Asn-3686, Asn-3712, Asn-3723, and Asn-3772 each carry an N-linked (GlcNAc...) asparagine glycan. N-linked (GlcNAc...) asparagine glycosylation is found at Asn-3976, Asn-4063, Asn-4194, Asn-4218, Asn-4304, Asn-4340, Asn-4365, and Asn-4410. N-linked (GlcNAc...) asparagine glycans are attached at residues Asn-4556, Asn-4575, Asn-4683, Asn-4716, Asn-4746, Asn-4756, Asn-4765, Asn-4915, and Asn-4934. The helical transmembrane segment at 5034 to 5054 (FIMVMAVVGLILLAIFLSLIL) threads the bilayer. Topologically, residues 5055-5193 (QRKIHKEPCI…EHTAFTDTHL (139 aa)) are cytoplasmic. Residues 5191–5193 (THL) carry the PDZ-binding motif.

As to quaternary structure, interacts with collagen IV and fibronectin via its laminin EGF-like domains. Interaction with collagen may be required for stable integration into the basement membrane. Interacts with NINL. Interacts with USH1C. Component of USH2 complex, composed of ADGRV1, PDZD7, USH2A and WHRN. Interacts with ADGRV1/MASS1 (via N-terminal PDZ domain). Interacts (via the cytoplasmic region) with WHRN. Interacts (via the cytoplasmic region) with PDZD7. Interacts (via the cytoplasmic region) with VEZT and MYO7A (via MyTH4-FERM domains); the interaction associates VEZT with the USH2 complex at the stereocilia base. As to expression, present in the testis, epididymis, oviduct, spleen, submaxillary gland, and small and large intestines. Not detected in the brain, skin, lung, skeletal muscle, cardiac muscle, liver or kidney. Expressed in smooth muscle of the colon and the epididymis. Also present in select vascular basement membranes. In the cochlea, it is present in virtually every basement membrane. It is particularly high in the strial capillary basement membranes (SCBMs). In the retina, it is again expressed in all of the basement membranes. It is also very prevalent in the lens capsule and the Bruch's layer between the retinal pigment epithelium and the choroid layer, which is very rich in basement membranes. In neonates in it is widely expressed in the basement membranes of the cochlea. Present in the synaptic terminals of retinal photoreceptors (at protein level).

It localises to the cell projection. The protein localises to the stereocilium membrane. It is found in the photoreceptor inner segment. The protein resides in the secreted. Its function is as follows. Involved in hearing and vision as member of the USH2 complex. In the inner ear, required for the maintenance of hair bundle ankle formation, which connects growing stereocilia in developing cochlear hair cells. In retina photoreceptors, the USH2 complex is required for the maintenance of periciliary membrane complex that seems to play a role in regulating intracellular protein transport. The chain is Usherin (Ush2A) from Mus musculus (Mouse).